Reading from the N-terminus, the 446-residue chain is Probable cytosolic iron-sulfur protein assembly protein 1 (446 aa).

7 WD repeats span residues 17-59, 63-106, 143-182, 192-241, 247-291, 330-368, and 398-446; these read AFKP…AHSN, GHTR…PLEE, GHEN…EGDD, EHDG…EWAC, GHSS…PEAS, VHTR…NPST, and GHGP…SIEL. The span at 106 to 128 shows a compositional bias: basic and acidic residues; sequence EGTKKGESTEIDVTRRRNNNDSD. The disordered stretch occupies residues 106 to 133; the sequence is EGTKKGESTEIDVTRRRNNNDSDKDNDD.

The protein belongs to the WD repeat CIA1 family.

Essential component of the cytosolic iron-sulfur (Fe/S) protein assembly machinery. Required for the maturation of extramitochondrial Fe/S proteins. The protein is Probable cytosolic iron-sulfur protein assembly protein 1 of Pyricularia oryzae (strain 70-15 / ATCC MYA-4617 / FGSC 8958) (Rice blast fungus).